The sequence spans 291 residues: tRNA U34 carboxymethyltransferase (291 aa).

Carboxy-S-adenosyl-L-methionine is bound by residues Lys61, Trp75, Lys80, Gly100, 122–124, 149–150, Tyr169, and Arg284; these read DPS and VE.

Belongs to the class I-like SAM-binding methyltransferase superfamily. CmoB family. In terms of assembly, homotetramer.

The catalysed reaction is carboxy-S-adenosyl-L-methionine + 5-hydroxyuridine(34) in tRNA = 5-carboxymethoxyuridine(34) in tRNA + S-adenosyl-L-homocysteine + H(+). Its function is as follows. Catalyzes carboxymethyl transfer from carboxy-S-adenosyl-L-methionine (Cx-SAM) to 5-hydroxyuridine (ho5U) to form 5-carboxymethoxyuridine (cmo5U) at position 34 in tRNAs. In Campylobacter jejuni subsp. jejuni serotype O:23/36 (strain 81-176), this protein is tRNA U34 carboxymethyltransferase.